The sequence spans 499 residues: Serine carboxypeptidase 1 (499 aa).

The N-terminal stretch at 1-30 (MARCRRRSGCTAGAALLLLLALALSGGGGA) is a signal peptide. Disulfide bonds link C92-C388, C256-C268, and C291-C355. N148 carries an N-linked (GlcNAc...) asparagine glycan. S188 is an active-site residue. A glycan (N-linked (GlcNAc...) asparagine) is linked at N262. Positions 297–351 (IKEVNLQNSKLPQSFKDLGTTNKPFPVRTRMLGRAWPLRAPVKAGRVPSWQEVAS) are cleaved as a propeptide — linker peptide. N-linked (GlcNAc...) asparagine glycosylation is present at N407. Active-site residues include D423 and H476. Positions 497–499 (SKL) match the Microbody targeting signal motif.

It belongs to the peptidase S10 family. In terms of assembly, carboxypeptidase I is a dimer, where each monomer is composed of two chains linked by disulfide bonds. In terms of processing, the linker peptide is endoproteolytically excised during enzyme maturation.

The protein localises to the secreted. The catalysed reaction is Release of a C-terminal amino acid with broad specificity.. Its function is as follows. May be involved in the degradation of small peptides (2-5 residues) or in the degradation of storage proteins in the embryo. The polypeptide is Serine carboxypeptidase 1 (CBP1) (Hordeum vulgare (Barley)).